The sequence spans 422 residues: UDP-N-acetylglucosamine 1-carboxyvinyltransferase (422 aa).

22-23 (KN) provides a ligand contact to phosphoenolpyruvate. Residue R95 participates in UDP-N-acetyl-alpha-D-glucosamine binding. C119 functions as the Proton donor in the catalytic mechanism. C119 is modified (2-(S-cysteinyl)pyruvic acid O-phosphothioketal). Residues 124-128 (RPIDQ), D309, and V331 contribute to the UDP-N-acetyl-alpha-D-glucosamine site.

This sequence belongs to the EPSP synthase family. MurA subfamily.

It localises to the cytoplasm. It catalyses the reaction phosphoenolpyruvate + UDP-N-acetyl-alpha-D-glucosamine = UDP-N-acetyl-3-O-(1-carboxyvinyl)-alpha-D-glucosamine + phosphate. It participates in cell wall biogenesis; peptidoglycan biosynthesis. Functionally, cell wall formation. Adds enolpyruvyl to UDP-N-acetylglucosamine. The sequence is that of UDP-N-acetylglucosamine 1-carboxyvinyltransferase from Anaeromyxobacter dehalogenans (strain 2CP-1 / ATCC BAA-258).